The chain runs to 368 residues: MEKRDYYEVLGLTKDEIKKAYRKLSKQYHPDLNKEPGADEKFKEIAEAYEVLSDDQKKARYDQFGHEDPNAGFGGGFGGGGFGGFEDIFSSFFGGGGRRQDPNAPRKGDDLQYRMNIKFEEAIFGKETEIEIPKDETCETCHGSGAKPGTQPETCSTCNGAGQINQAVDTPFGRMMNRRSCTTCHGTGKIIKEKCSTCRGEGKVQKRKKIKVSIPAGVDDGQQIRVSGQGEPGINGGPAGDLYIMFRVQGHNDFERDGDDIYFELKLTFPQAALGDEIEVPTVHGKVKLRIPAGTQSGAQFRLKDKGVKNVHGYGMGNQYVTVKVMTPEKLTEKQKQLLREFAEISGDIPEEQGSSLFDKIKKKFQGE.

The J domain occupies 5-65; it reads DYYEVLGLTK…QKKARYDQFG (61 aa). Residues 125 to 207 form a CR-type zinc finger; that stretch reads GKETEIEIPK…CRGEGKVQKR (83 aa). Positions 138, 141, 155, 158, 181, 184, 195, and 198 each coordinate Zn(2+). 4 CXXCXGXG motif repeats span residues 138 to 145, 155 to 162, 181 to 188, and 195 to 202; these read CETCHGSG, CSTCNGAG, CTTCHGTG, and CSTCRGEG.

The protein belongs to the DnaJ family. In terms of assembly, homodimer. The cofactor is Zn(2+).

It is found in the cytoplasm. Participates actively in the response to hyperosmotic and heat shock by preventing the aggregation of stress-denatured proteins and by disaggregating proteins, also in an autonomous, DnaK-independent fashion. Unfolded proteins bind initially to DnaJ; upon interaction with the DnaJ-bound protein, DnaK hydrolyzes its bound ATP, resulting in the formation of a stable complex. GrpE releases ADP from DnaK; ATP binding to DnaK triggers the release of the substrate protein, thus completing the reaction cycle. Several rounds of ATP-dependent interactions between DnaJ, DnaK and GrpE are required for fully efficient folding. Also involved, together with DnaK and GrpE, in the DNA replication of plasmids through activation of initiation proteins. In Lysinibacillus sphaericus (Bacillus sphaericus), this protein is Chaperone protein DnaJ.